The chain runs to 215 residues: Thiamine import ATP-binding protein ThiQ (215 aa).

An ABC transporter domain is found at isoleucine 2–valine 215. An ATP-binding site is contributed by glycine 32 to serine 39.

It belongs to the ABC transporter superfamily. Thiamine importer (TC 3.A.1.19.1) family. As to quaternary structure, the complex is composed of two ATP-binding proteins (ThiQ), two transmembrane proteins (ThiP) and a solute-binding protein (ThiB).

The protein resides in the cell inner membrane. The catalysed reaction is thiamine(out) + ATP + H2O = thiamine(in) + ADP + phosphate + H(+). Part of the ABC transporter complex ThiBPQ involved in thiamine import. Responsible for energy coupling to the transport system. The polypeptide is Thiamine import ATP-binding protein ThiQ (Haemophilus influenzae (strain ATCC 51907 / DSM 11121 / KW20 / Rd)).